We begin with the raw amino-acid sequence, 197 residues long: MTITINNYNNDKKNLILGLTGSVATIKAKLLVEQLIQHFNLIVIPTETSLKFLSDQDFEFISSKCKIYKDKDEWENVDLLKRSALHIDLRNWANSILISPCSANTLGKISNGLCDNLLTSLIRAWDYKNKSMILAPAMNTMMWENPFTFKHIETLKSISPNVFIIDPIEKKLFCGDIGMGAMEQVPKIVDFTINNLK.

FMN is bound by residues F52 and 102–105; that span reads SANT. N139 provides a ligand contact to substrate. Residue C174 is the Proton donor of the active site.

Belongs to the HFCD (homooligomeric flavin containing Cys decarboxylase) superfamily. In terms of assembly, homotrimer. FMN is required as a cofactor.

It catalyses the reaction N-[(R)-4-phosphopantothenoyl]-L-cysteine + H(+) = (R)-4'-phosphopantetheine + CO2. It participates in cofactor biosynthesis; coenzyme A biosynthesis; CoA from (R)-pantothenate: step 3/5. Its function is as follows. Necessary for the biosynthesis of coenzyme A. Catalyzes the decarboxylation of 4-phosphopantothenoylcysteine to form 4'-phosphopantotheine. The polypeptide is Putative phosphopantothenoylcysteine decarboxylase (ppcdc) (Dictyostelium discoideum (Social amoeba)).